We begin with the raw amino-acid sequence, 452 residues long: Zinc finger protein 277 (452 aa).

Residues 200–224 form a C2H2-type 1 zinc finger; sequence LMCLYCEKIFRDRPTLKEHMRKKGH. Positions 248–271 are disordered; it reads APTPRKQHLQKRRRETASVSTVAD. A compositionally biased stretch (basic residues) spans 252–261; the sequence is RKQHLQKRRR. The C2H2-type 2 zinc finger occupies 361-385; it reads LRCVTCDLQFDEEELLVEHMAQESH.

This sequence belongs to the ZNF277 family. Interacts with components of the origin recognition complex (ORC) complex, Orc2 and Orc3, components of the SAGA transcription coactivator-HAT complex, Gcn5 and e(y)2, components of the mRNP biogenesis THO complex, thoc5 and e(y)2, and a component of the TFIID complex, TBP. Also interacts with polybromo, a component of the chromatin remodeling SWI/SNF complex.

The protein localises to the nucleus. It is found in the cytoplasm. Functionally, DNA binding protein which is involved in the positive regulation of both basal and inducible transcription. Mainly localizes to active promoter sites and interacts with components of various transcription and replication regulatory complexes, such as the ORC, SAGA, THO, TFIID and SWI/SNF complexes. It may therefore regulate transcription by promoting the association of these complexes to their binding sites. The chain is Zinc finger protein 277 from Drosophila melanogaster (Fruit fly).